The following is a 115-amino-acid chain: U3-lycotoxin-Ls1a (115 aa).

An N-terminal signal peptide occupies residues 1–20; sequence MKFVLLFGVLLVTLFSYSSA. A propeptide spanning residues 21 to 44 is cleaved from the precursor; sequence EMLDDFDQADEDELLSSIEKEEAR. Intrachain disulfides connect cysteine 48–cysteine 63, cysteine 55–cysteine 72, cysteine 62–cysteine 87, and cysteine 74–cysteine 85.

Belongs to the neurotoxin 19 (CSTX) family. 01 subfamily. Expressed by the venom gland.

The protein localises to the secreted. The sequence is that of U3-lycotoxin-Ls1a from Lycosa singoriensis (Wolf spider).